The primary structure comprises 74 residues: Kappa-scoloptoxin(07)-Ssm2d (74 aa).

The signal sequence occupies residues 1-19 (MLVFYALLFVTVFSNTVMG). Positions 20–41 (ATIDKPIPKPILREAIEEIEVN) are excised as a propeptide.

This sequence belongs to the scoloptoxin-07 family. Post-translationally, contains 3 disulfide bonds. Expressed by the venom gland.

Its subcellular location is the secreted. Inhibits voltage-gated potassium channels. The sequence is that of Kappa-scoloptoxin(07)-Ssm2d from Scolopendra mutilans (Chinese red-headed centipede).